Here is an 88-residue protein sequence, read N- to C-terminus: Phage-like element PBSX protein XkdR (88 aa).

This sequence to B.subtilis YqbR.

The sequence is that of Phage-like element PBSX protein XkdR (xkdR) from Bacillus subtilis (strain 168).